A 219-amino-acid polypeptide reads, in one-letter code: MTPVKVFGPAQSTNVARVLLCLEEVGAEYEVVNVDFTVMEHKSPEHLKRNPFGQIPAFQDGDLYLFESRAIGKYILRKYKTREADLLREGNLREAAMVDVWTEVETHQYNSAISPIVYECIINPAMRGIPTNQKVVDESAEKLKKVLEVYEARLSQSTYLAGDFVSFADLNHFPYTFYFMGTPYASLFDSYPHVKAWWERLMARPSVKKLAAVMAPQGA.

The 82-residue stretch at 2–83 folds into the GST N-terminal domain; sequence TPVKVFGPAQ…YILRKYKTRE (82 aa). Glutathione is bound by residues serine 12, 41 to 42, 54 to 55, and 67 to 68; these read HK, QI, and ES. Positions 91–219 constitute a GST C-terminal domain; the sequence is NLREAAMVDV…LAAVMAPQGA (129 aa).

Belongs to the GST superfamily. Phi family. Constitutively expressed in roots.

The catalysed reaction is RX + glutathione = an S-substituted glutathione + a halide anion + H(+). Conjugation of reduced glutathione to a wide number of exogenous and endogenous hydrophobic electrophiles. This Oryza sativa subsp. japonica (Rice) protein is Probable glutathione S-transferase GSTF1 (GSTF1).